The chain runs to 407 residues: tRNA (guanine-N(7)-)-methyltransferase non-catalytic subunit wuho (407 aa).

3 WD repeats span residues Ala-83–Leu-124, Gly-171–Ser-210, and Gly-214–Ile-252.

Belongs to the WD repeat TRM82 family. As to quaternary structure, forms a heterodimer with the catalytic subunit Mettl1. Interacts with mei-P26 and weakly interacts with bgcn; required for the function or formation of the mei-P26-bgcn-bam-sxl complex. Interacts with nanos; may be involved in mei-P26-dependent derepression of the BMP signaling pathway. Interacts with Myc; the interaction may be mediated by mei-P26 and may be involved in the regulation of ribosome biogenesis. As to expression, in testis, it is present at high level in hub cells, a niche for germline stem cells of testis. Ubiquitously expressed in all testicular cells throughout spermatogenesis. Ubiquitously expressed in all germline and somatic cells of the ovary.

Its subcellular location is the nucleus. It is found in the cytoplasm. It participates in tRNA modification; N(7)-methylguanine-tRNA biosynthesis. In terms of biological role, required for the Mettl1-dependent formation of N(7)-methylguanine at position 46 (m7G46) in tRNA. In the Mettl1-wuho methyltransferase complex, it is required to stabilize and induce conformational changes of the catalytic subunit. Required for binding of nanos mRNA and repression of translation by the mei-P26-bgcn-bam-sxl complex. May cooperate with mei-P26 and nanos to derepress the BMP signaling pathway. May cooperate with mei-P26 to suppress expression of a subset of microRNAs. May cooperate with mei-P26 to regulate bam expression levels in germline cells during gametogenesis. Required to promote mitosis to meiosis transition during gametogenesis. May regulate germline cell division in part by regulating ribosome biogenesis. The sequence is that of tRNA (guanine-N(7)-)-methyltransferase non-catalytic subunit wuho from Drosophila ananassae (Fruit fly).